A 358-amino-acid polypeptide reads, in one-letter code: 3-dehydroquinate synthase (358 aa).

NAD(+) is bound by residues 70-75 (DGEQYK), 104-108 (GVIGD), 128-129 (TT), K141, K150, and 168-171 (CLST). 3 residues coordinate Zn(2+): E183, H246, and H263.

Belongs to the sugar phosphate cyclases superfamily. Dehydroquinate synthase family. The cofactor is Co(2+). Zn(2+) serves as cofactor. Requires NAD(+) as cofactor.

It is found in the cytoplasm. It catalyses the reaction 7-phospho-2-dehydro-3-deoxy-D-arabino-heptonate = 3-dehydroquinate + phosphate. It participates in metabolic intermediate biosynthesis; chorismate biosynthesis; chorismate from D-erythrose 4-phosphate and phosphoenolpyruvate: step 2/7. Catalyzes the conversion of 3-deoxy-D-arabino-heptulosonate 7-phosphate (DAHP) to dehydroquinate (DHQ). This is 3-dehydroquinate synthase from Shewanella woodyi (strain ATCC 51908 / MS32).